The sequence spans 544 residues: Chaperonin GroEL (544 aa).

Residues 30-33, Lys51, 87-91, Gly415, 481-483, and Asp497 each bind ATP; these read TLGP, DGTTT, and DAL.

It belongs to the chaperonin (HSP60) family. As to quaternary structure, forms a cylinder of 14 subunits composed of two heptameric rings stacked back-to-back. Interacts with the co-chaperonin GroES.

Its subcellular location is the cytoplasm. It carries out the reaction ATP + H2O + a folded polypeptide = ADP + phosphate + an unfolded polypeptide.. Functionally, together with its co-chaperonin GroES, plays an essential role in assisting protein folding. The GroEL-GroES system forms a nano-cage that allows encapsulation of the non-native substrate proteins and provides a physical environment optimized to promote and accelerate protein folding. In Chlamydia trachomatis serovar L2 (strain ATCC VR-902B / DSM 19102 / 434/Bu), this protein is Chaperonin GroEL.